A 154-amino-acid chain; its full sequence is Transcriptional repressor NrdR (154 aa).

The segment at 3-34 (CPFCRHPDSRVVDSRETDEGQAIRRRRSCPEC) is a zinc-finger region. One can recognise an ATP-cone domain in the interval 46–136 (LAVVKRSGVT…VYRSFESAAD (91 aa)).

This sequence belongs to the NrdR family. It depends on Zn(2+) as a cofactor.

Its function is as follows. Negatively regulates transcription of bacterial ribonucleotide reductase nrd genes and operons by binding to NrdR-boxes. This is Transcriptional repressor NrdR from Mycobacterium sp. (strain JLS).